The following is a 205-amino-acid chain: Guanylyl cyclase-activating protein 1 (205 aa).

Residue glycine 2 is the site of N-myristoyl glycine attachment. The residue at position 3 (asparagine 3) is a Deamidated asparagine. 4 EF-hand domains span residues 30-48 (SGQL…KNLS), 50-85 (ASNQ…VLKG), 86-121 (KVEQ…IRAI), and 129-164 (TAEE…DELL). Residues aspartate 63, asparagine 65, aspartate 67, tyrosine 69, glutamate 74, aspartate 99, aspartate 101, asparagine 103, cysteine 105, glutamate 110, aspartate 142, asparagine 144, aspartate 146, glutamate 148, and glutamate 153 each coordinate Ca(2+).

As to expression, retina.

Regulatory protein that inhibits guanylyl cyclase when free calcium ions concentration is elevated. This Ca(2+)-sensitive regulation of retinal guanylyl cyclase is a key event in recovery of the dark state of rod photoreceptors following light exposure. The sequence is that of Guanylyl cyclase-activating protein 1 (GUCA1A) from Lithobates pipiens (Northern leopard frog).